A 25-amino-acid polypeptide reads, in one-letter code: uncharacterized protein (25 aa).

This is an uncharacterized protein from Escherichia coli (Bacteriophage T3).